The sequence spans 1357 residues: DNA-directed RNA polymerase subunit beta (1357 aa).

The protein belongs to the RNA polymerase beta chain family. As to quaternary structure, the RNAP catalytic core consists of 2 alpha, 1 beta, 1 beta' and 1 omega subunit. When a sigma factor is associated with the core the holoenzyme is formed, which can initiate transcription.

The catalysed reaction is RNA(n) + a ribonucleoside 5'-triphosphate = RNA(n+1) + diphosphate. In terms of biological role, DNA-dependent RNA polymerase catalyzes the transcription of DNA into RNA using the four ribonucleoside triphosphates as substrates. In Ectopseudomonas mendocina (strain ymp) (Pseudomonas mendocina), this protein is DNA-directed RNA polymerase subunit beta.